Reading from the N-terminus, the 59-residue chain is Venom protein 37.1 (59 aa).

Positions 1–18 are cleaved as a signal peptide; that stretch reads MVSTLMIASVKLRLYCTA.

It belongs to the non-disulfide-bridged peptide (NDBP) superfamily. Long chain multifunctional peptide (group 2) family. In terms of tissue distribution, expressed by the venom gland.

It localises to the secreted. The chain is Venom protein 37.1 from Lychas mucronatus (Chinese swimming scorpion).